The sequence spans 3033 residues: Genome polyprotein (3033 aa).

Serine 2 is modified (N-acetylserine; by host). Positions 2-23 are interaction with STAT1; that stretch reads STNPKPQRKTKRNTNRRPQDVK. The interval 2–58 is interaction with EIF2AK2/PKR; it reads STNPKPQRKTKRNTNRRPQDVKFPGGGQIVGGVYLLPRRGPRLGVRATRKTSERSQP. The segment at 2–59 is interaction with DDX3X; sequence STNPKPQRKTKRNTNRRPQDVKFPGGGQIVGGVYLLPRRGPRLGVRATRKTSERSQPR. A disordered region spans residues 2–75; it reads STNPKPQRKT…PKDRRSTGKS (74 aa). 2 consecutive short sequence motifs (nuclear localization signal) follow at residues 5–13 and 38–43; these read PKPQRKTKR and PRRGPR. Over residues 7–16 the composition is skewed to basic residues; that stretch reads PQRKTKRNTN. Residues 32-47 show a composition bias toward low complexity; the sequence is GGVYLLPRRGPRLGVR. Serine 53 carries the post-translational modification Phosphoserine; by host. 2 short sequence motifs (nuclear localization signal) span residues 58-64 and 66-71; these read PRGRRQP and PKDRRS. Serine 99 and serine 116 each carry phosphoserine; by host. Residues 112-152 form an important for endoplasmic reticulum and mitochondrial localization region; the sequence is PRHRSRNLGRVIDTITCGFADLMGYIPVVGAPVGGVARALA. The tract at residues 122-173 is interaction with APOA2; it reads VIDTITCGFADLMGYIPVVGAPVGGVARALAHGVRVLEDGINYATRNLPGCS. The tract at residues 164–167 is important for lipid droplets localization; it reads YATR. A propeptide spans 178 to 191 (ER anchor for the core protein, removed in mature form by host signal peptidase); the sequence is LLALLSCVTVPVSS. At 190-358 the chain is on the lumenal side; that stretch reads SSVEIRNIST…FGGHWGVVFG (169 aa). 2 N-linked (GlcNAc...) asparagine; by host glycosylation sites follow: asparagine 196 and asparagine 209. The interval 265–296 is important for fusion; sequence IVMAATVCSALYVGDVCGAVMIVSQALIVSPE. Asparagine 305 carries N-linked (GlcNAc...) asparagine; by host glycosylation. A helical transmembrane segment spans residues 359 to 379; sequence LAYFSMQGAWAKVIAILLLVA. Over 380–729 the chain is Lumenal; sequence GVDATTYSTG…WEWVVLLFLL (350 aa). Positions 385–412 are HVR1; it reads TYSTGATVGRTVGSFAGLFKLGAQQNVQ. Residues asparagine 417, asparagine 423, and asparagine 430 are each glycosylated (N-linked (GlcNAc...) (high mannose) asparagine; by host). 4 disulfides stabilise this stretch: cysteine 429–cysteine 554, cysteine 452–cysteine 459, cysteine 488–cysteine 496, and cysteine 505–cysteine 510. Residue asparagine 448 is glycosylated (N-linked (GlcNAc...) asparagine; by host). The HVR2 stretch occupies residues 475 to 480; sequence ETNVTN. Residue asparagine 477 is glycosylated (N-linked (GlcNAc...) asparagine; by host). The interval 482-495 is CD81-binding 1; sequence EDMRPYCWHYPPKP. A glycan (N-linked (GlcNAc...) asparagine; by host) is linked at asparagine 534. Positions 546 to 553 are CD81-binding 2; that stretch reads PPRGAWFG. N-linked (GlcNAc...) asparagine; by host glycosylation occurs at asparagine 558. Cystine bridges form between cysteine 566–cysteine 571, cysteine 585–cysteine 589, cysteine 601–cysteine 624, and cysteine 611–cysteine 648. Residues asparagine 627 and asparagine 649 are each glycosylated (N-linked (GlcNAc...) (high mannose) asparagine; by host). Cysteine 656 and cysteine 681 form a disulfide bridge. A PKR/eIF2-alpha phosphorylation homology domain (PePHD) region spans residues 664–675; that stretch reads GQQSPLLHSTTE. The helical transmembrane segment at 730–750 threads the bilayer; it reads LADARICACLWMLIILGQAEA. Topologically, residues 751 to 761 are lumenal; that stretch reads ALEKLIILHSA. The helical transmembrane segment at 762 to 782 threads the bilayer; that stretch reads SAASANGPLWFFIFFTAAWYL. Over 783–786 the chain is Cytoplasmic; it reads KGRV. A helical transmembrane segment spans residues 787–807; sequence VPAATYSVLGLWSFLLLVLAL. At 808 to 817 the chain is on the lumenal side; sequence PQQAYALDAA. A helical transmembrane segment spans residues 818–838; sequence EQGELGLVILMIISIFTLTPA. Topologically, residues 839 to 885 are cytoplasmic; that stretch reads YKILLSRSVWWLSYMLVLAEAQVQQWVPPLEARGGRDGIIWVAVILH. Residues 886–906 traverse the membrane as a helical segment; that stretch reads PHLVFEVTKWLLAILGSAYLL. Residues 907–932 are Lumenal-facing; that stretch reads KASLLRVPYFVRAHALLRVCTLVRHL. Positions 907–1030 constitute a Peptidase C18 domain; it reads KASLLRVPYF…GYTSKGWKLL (124 aa). The protease NS2-3 stretch occupies residues 908-1210; it reads ASLLRVPYFV…PVESLDIARR (303 aa). Residue cysteine 926 is the site of S-palmitoyl cysteine; by host attachment. The chain crosses the membrane as a helical span at residues 933–953; sequence AGARYIQMLLITMGRWTGTYI. Positions 933-953 are interaction with host SCPS1; that stretch reads AGARYIQMLLITMGRWTGTYI. Over 954–1661 the chain is Cytoplasmic; that stretch reads YDHLSPLSTW…CMQADLEVMT (708 aa). Active-site for protease NS2 activity; shared with dimeric partner residues include histidine 956, glutamate 976, and cysteine 997. A Peptidase S29 domain is found at 1031–1212; the sequence is APITAYTQQT…ESLDIARRTP (182 aa). Residues histidine 1087 and aspartate 1111 each act as charge relay system; for serine protease NS3 activity in the active site. Positions 1127 and 1129 each coordinate Zn(2+). Catalysis depends on serine 1169, which acts as the Charge relay system; for serine protease NS3 activity. 2 residues coordinate Zn(2+): cysteine 1175 and histidine 1179. One can recognise a Helicase ATP-binding domain in the interval 1221-1373; sequence PAVPQTYQVG…ANIEEVALGH (153 aa). 1234–1241 lines the ATP pocket; the sequence is APTGSGKS. Mg(2+)-binding residues include serine 1241 and glutamate 1321. The DECH box motif lies at 1320–1323; it reads DECH. The tract at residues 1490–1502 is RNA-binding; it reads QRRGRTGRGRLGT. The helical transmembrane segment at 1662–1682 threads the bilayer; it reads STWVLAGGVLAAVAAYCLATG. Residues 1683–1694 form an NS3-binding region; it reads CISIIGRIHLND. The Cytoplasmic segment spans residues 1683–1809; it reads CISIIGRIHL…ALTSPLPTST (127 aa). A helical membrane pass occupies residues 1810-1830; sequence TILLNIMGGWLASQIAPPAGA. Residues 1831–1832 lie on the Lumenal side of the membrane; that stretch reads TG. The chain crosses the membrane as a helical span at residues 1833–1853; that stretch reads FVVSGLVGAAVGSIGLGKILV. Position 1854 (aspartate 1854) is a topological domain, cytoplasmic. Residues 1855-1875 form a helical membrane-spanning segment; that stretch reads VLAGYGAGISGALVAFKIMSG. Topologically, residues 1876–1885 are lumenal; the sequence is EKPSVEDVVN. A helical transmembrane segment spans residues 1886–1906; it reads LLPAILSPGALVVGVICAAIL. Topologically, residues 1907 to 1976 are cytoplasmic; that stretch reads RRHVGQGEGA…WITEDCPVPC (70 aa). Residue cysteine 1976 is the site of S-palmitoyl cysteine; by host attachment. The stretch at 1977 to 2007 is an intramembrane region; it reads SGSWLRDIWEWVCSILTDFKNWLSAKLLPKM. Over 2008–3012 the chain is Cytoplasmic; it reads PGLPFISCQK…FHSVSHARPR (1005 aa). Zn(2+) is bound by residues cysteine 2015, cysteine 2033, cysteine 2035, and cysteine 2056. Positions 2124 to 2212 are FKBP8-binding; the sequence is EFFSWVDGVQ…ASSSASQLSA (89 aa). Residues 2124-2332 are transcriptional activation; the sequence is EFFSWVDGVQ…PVPPPRRRRA (209 aa). Positions 2139-2143 are interaction with non-structural protein 4A; that stretch reads PTPGP. Residues 2192–2213 are disordered; the sequence is RRLARGSPPSQASSSASQLSAP. The interaction with host SKP2 stretch occupies residues 2193–2460; sequence RLARGSPPSQ…ALITPCGPEE (268 aa). Phosphoserine; by host occurs at positions 2198, 2201, 2205, 2208, 2211, and 2214. The span at 2198-2213 shows a compositional bias: low complexity; that stretch reads SPPSQASSSASQLSAP. Positions 2214 to 2249 are ISDR; that stretch reads SLKATCTTHKTAYDCDMVDANLFMGGDVTRIESDSK. An interaction with EIF2AK2/PKR region spans residues 2214–2275; that stretch reads SLKATCTTHK…REPSVPSEYL (62 aa). An NS4B-binding region spans residues 2249–2306; it reads KVIVLDSLDSMTEVEDDREPSVPSEYLTRRRKFPPALPPWARPDYNPPVIETWKRPDY. The tract at residues 2299–2377 is V3; that stretch reads ETWKRPDYEP…DTGGDSVQQP (79 aa). An SH3-binding motif is present at residues 2322–2325; it reads APVP. Positions 2327–2335 match the Nuclear localization signal motif; sequence PRRRRARVL. Lysine 2350 is covalently cross-linked (Glycyl lysine isopeptide (Lys-Gly) (interchain with G-Cter in ubiquitin)). The tract at residues 2354-2431 is disordered; that stretch reads PLQDTNDSGH…IDSDSKSWST (78 aa). A compositionally biased stretch (polar residues) spans 2355 to 2391; the sequence is LQDTNDSGHSTGADTGGDSVQQPSGETAASDAGSLSS. Residues serine 2471 and serine 2484 each carry the phosphoserine; by host modification. In terms of domain architecture, RdRp catalytic spans 2656-2774; it reads PMGFSYDTRC…ISESQGNEED (119 aa). 3 residues coordinate Mg(2+): aspartate 2662, aspartate 2760, and aspartate 2761. Residues 3013–3033 traverse the membrane as a helical segment; that stretch reads LLLLCLLLLSVGVGIFLLPAR.

It belongs to the hepacivirus polyprotein family. Homooligomer. Interacts with E1 (via C-terminus). Interacts with the non-structural protein 5A. Interacts (via N-terminus) with host STAT1 (via SH2 domain); this interaction results in decreased STAT1 phosphorylation and ubiquitin-mediated proteasome-dependent STAT1 degradation, leading to decreased IFN-stimulated gene transcription. Interacts with host STAT3; this interaction constitutively activates STAT3. Interacts with host LTBR receptor. Interacts with host TNFRSF1A receptor and possibly induces apoptosis. Interacts with host HNRPK. Interacts with host YWHAE. Interacts with host UBE3A/E6AP. Interacts with host DDX3X. Interacts with host APOA2. Interacts with host RXRA protein. Interacts with host SP110 isoform 3/Sp110b; this interaction sequesters the transcriptional corepressor SP110 away from the nucleus. Interacts with host CREB3 nuclear transcription protein; this interaction triggers cell transformation. Interacts with host ACY3. Interacts with host C1QR1. Interacts with host RBM24; this interaction, which enhances the interaction of the mature core protein with 5'-UTR, may inhibit viral translation and favor replication. Interacts with host EIF2AK2/PKR; this interaction induces the autophosphorylation of EIF2AK2. Part of the viral assembly initiation complex composed of NS2, E1, E2, NS3, NS4A, NS5A and the mature core protein. As to quaternary structure, forms a heterodimer with envelope glycoprotein E2. Interacts with mature core protein. Interacts with protease NS2. The heterodimer E1/E2 interacts with host CLDN1; this interaction plays a role in viral entry into host cell. Interacts with host SPSB2 (via C-terminus). Part of the viral assembly initiation complex composed of NS2, E1, E2, NS3, NS4A, NS5A and the mature core protein. Interacts with host NEURL3; this interaction prevents E1 binding to glycoprotein E2. In terms of assembly, forms a heterodimer with envelope glycoprotein E1. Interacts with host CD81 and SCARB1 receptors; these interactions play a role in viral entry into host cell. Interacts with host EIF2AK2/PKR; this interaction inhibits EIF2AK2 and probably allows the virus to evade the innate immune response. Interacts with host CD209/DC-SIGN and CLEC4M/DC-SIGNR. Interact with host SPCS1; this interaction is essential for viral particle assembly. Interacts with protease NS2. The heterodimer E1/E2 interacts with host CLDN1; this interaction plays a role in viral entry into host cell. Part of the viral assembly initiation complex composed of NS2, E1, E2, NS3, NS4A, NS5A and the mature core protein. Interacts with host SLC3A2/4F2hc; the interaction may facilitate viral entry into host cell. Interacts with human PLSCR1. Homohexamer. Homoheptamer. Interacts with protease NS2. As to quaternary structure, homodimer. Interacts with host SPCS1; this interaction is essential for viral particle assembly. Interacts with envelope glycoprotein E1. Interacts with envelope glycoprotein E2. Interacts with viroporin p7. Interacts with serine protease/helicase NS3. Part of the replication complex composed of NS2, NS3, NS4A, NS4B, NS5A and the RNA-directed RNA polymerase embedded in an ER-derived membranous web. Part of the viral assembly initiation complex composed of NS2, E1, E2, NS3, NS4A, NS5A and the mature core protein. In terms of assembly, interacts with protease NS2. Interacts with non-structural protein 4A; this interaction stabilizes the folding of NS3 serine protease. NS3-NS4A interaction is essential for NS3 activation and allows membrane anchorage of the latter. NS3/NS4A complex also prevents phosphorylation of host IRF3, thus preventing the establishment of dsRNA induced antiviral state. Interacts with host MAVS; this interaction leads to the cleavage and inhibition of host MAVS. Interacts with host TICAM1; this interaction leads to the cleavage and inhibition of host TICAM1. Interacts with host TANK-binding kinase/TBK1; this interaction results in the inhibition of the association between TBK1 and IRF3, which leads to the inhibition of IRF3 activation. Interacts with host RBM24. Part of the replication complex composed of NS2, NS3, NS4A, NS4B, NS5A and the RNA-directed RNA polymerase embedded in an ER-derived membranous web. Part of the viral assembly initiation complex composed of NS2, E1, E2, NS3, NS4A, NS5A and the mature core protein. Interacts with NS3 serine protease; this interaction stabilizes the folding of NS3 serine protease. NS3-NS4A interaction is essential for NS3 activation and allows membrane anchorage of the latter. Interacts with non-structural protein 5A (via N-terminus). Part of the replication complex composed of NS2, NS3, NS4A, NS4B, NS5A and the RNA-directed RNA polymerase embedded in an ER-derived membranous web. Part of the viral assembly initiation complex composed of NS2, E1, E2, NS3, NS4A, NS5A and the mature core protein. As to quaternary structure, homomultimer. Interacts with non-structural protein NS5A. Interacts with host PLA2G4C; this interaction likely initiates the recruitment of replication complexes to lipid droplets. Interacts with host STING; this interaction disrupts the interaction between STING and TBK1 thereby suppressing the interferon signaling. Part of the replication complex composed of NS2, NS3, NS4A, NS4B, NS5A and the RNA-directed RNA polymerase embedded in an ER-derived membranous web. In terms of assembly, monomer. Homodimer; dimerization is required for RNA-binding. Interacts with the mature core protein. Interacts (via N-terminus) with non-structural protein 4A. Interacts with non-structural protein 4B. Interacts (via region D2) with RNA-directed RNA polymerase. Part of the viral assembly initiation complex composed of NS2, E1, E2, NS3, NS4A, NS5A and the mature core protein. Part of the replication complex composed of NS2, NS3, NS4A, NS4B, NS5A and the RNA-directed RNA polymerase embedded in an ER-derived membranous web. Interacts with host GRB2. Interacts with host BIN1. Interacts with host PIK3R1. Interacts with host SRCAP. Interacts with host FKBP8. Interacts (via C-terminus) with host VAPB (via MSP domain). Interacts with host EIF2AK2/PKR; this interaction leads to disruption of EIF2AK2 dimerization by NS5A and probably allows the virus to evade the innate immune response. Interacts (via N-terminus) with host PACSIN2 (via N-terminus); this interaction attenuates protein kinase C alpha-mediated phosphorylation of PACSIN2 by disrupting the interaction between PACSIN2 and PRKCA. Interacts (via N-terminus) with host SRC kinase (via SH2 domain). Interacts with most Src-family kinases. Interacts with host IFI27 and SKP2; promotes the ubiquitin-mediated proteasomal degradation of NS5A. Interacts with host GPS2. Interacts with host TNFRSF21; this interaction allows the modulation by the virus of JNK, p38 MAPK, STAT3, and Akt signaling pathways in a DR6-dependent manner. Interacts (via N-terminus) with host CIDEB (via N-terminus); this interaction seems to regulate the association of HCV particles with APOE. Interacts with host CHKA/Choline Kinase-alpha; CHKA bridges host PI4KA and NS5A and potentiates NS5A-stimulated PI4KA activity, which then facilitates the targeting of the ternary complex to the ER for viral replication. Interacts with host SPSB2 (via C-terminus); this interaction targets NS5A for ubiquitination and degradation. Interacts with host RAB18; this interaction may promote the association of NS5A and other replicase components with lipid droplets. Interacts (via region D2) with host PPIA/CYPA; the interaction stimulates RNA-binding ability of NS5A and is dependent on the peptidyl-prolyl cis-trans isomerase activity of PPIA/CYPA. Interacts with host TRIM14; this interaction induces the degradation of NS5A. Homooligomer. Interacts with non-structural protein 5A. Interacts with host VAPB. Interacts with host PRK2/PKN2. Interacts with host HNRNPA1 and SEPT6; these interactions facilitate viral replication. Part of the replication complex composed of NS2, NS3, NS4A, NS4B, NS5A and the RNA-directed RNA polymerase. Zn(2+) is required as a cofactor. It depends on Mg(2+) as a cofactor. Specific enzymatic cleavages in vivo yield mature proteins. The structural proteins, core, E1, E2 and p7 are produced by proteolytic processing by host signal peptidases. The core protein precursor is synthesized as a 23 kDa, which is retained in the ER membrane through the hydrophobic signal peptide. Cleavage by the signal peptidase releases the 21 kDa mature core protein. The cleavage of the core protein precursor occurs between aminoacids 176 and 188 but the exact cleavage site is not known. Some degraded forms of the core protein appear as well during the course of infection. The other proteins (p7, NS2, NS3, NS4A, NS4B, NS5A and NS5B) are cleaved by the viral proteases. Autoprocessing between NS2 and NS3 is mediated by the NS2 cysteine protease catalytic domain and regulated by the NS3 N-terminal domain. In terms of processing, phosphorylated by host PKC and PKA. Post-translationally, ubiquitinated; mediated by UBE3A and leading to core protein subsequent proteasomal degradation. Highly N-glycosylated. In terms of processing, palmitoylation is required for NS2/3 autoprocessing and E2 recruitment to membranes. Post-translationally, palmitoylated. This modification may play a role in its polymerization or in protein-protein interactions. Phosphorylated on serines in a basal form termed p56. p58 is a hyperphosphorylated form of p56. p56 and p58 coexist in the cell in roughly equivalent amounts. Hyperphosphorylation is dependent on the presence of NS4A. Host CSNK1A1/CKI-alpha or RPS6KB1 kinases may be responsible for NS5A phosphorylation. In terms of processing, tyrosine phosphorylation is essential for the interaction with host SRC. Post-translationally, ubiquitinated. Ubiquitination, most probably at Lys-2350, mediated by host IFI27 and SKP2 leads to proteasomal degradation, restricting viral infection. Ubiquitination by host TRIM22 leads to interruption of viral replication. The N-terminus is phosphorylated by host PRK2/PKN2.

Its subcellular location is the host endoplasmic reticulum membrane. It is found in the host mitochondrion membrane. It localises to the virion. The protein localises to the host cytoplasm. The protein resides in the host nucleus. Its subcellular location is the host lipid droplet. It is found in the virion membrane. It localises to the host mitochondrion. The protein localises to the host cell membrane. The protein resides in the host perinuclear region. The catalysed reaction is Hydrolysis of four peptide bonds in the viral precursor polyprotein, commonly with Asp or Glu in the P6 position, Cys or Thr in P1 and Ser or Ala in P1'.. It catalyses the reaction a ribonucleoside 5'-triphosphate + H2O = a ribonucleoside 5'-diphosphate + phosphate + H(+). The enzyme catalyses ATP + H2O = ADP + phosphate + H(+). It carries out the reaction RNA(n) + a ribonucleoside 5'-triphosphate = RNA(n+1) + diphosphate. Its activity is regulated as follows. Inhibited by the antiviral drug hexamethylene amiloride. Inhibition by amantadine appears to be genotype-dependent. Also inhibited by long-alkyl-chain iminosugar derivatives. With respect to regulation, activity is up-regulated by PRK2/PKN2-mediated phosphorylation. Its function is as follows. Packages viral RNA to form a viral nucleocapsid, and promotes virion budding. Participates in the viral particle production as a result of its interaction with the non-structural protein 5A. Binds RNA and may function as a RNA chaperone to induce the RNA structural rearrangements taking place during virus replication. Modulates viral translation initiation by interacting with viral IRES and 40S ribosomal subunit. Affects various cell signaling pathways, host immunity and lipid metabolism. Prevents the establishment of cellular antiviral state by blocking the interferon-alpha/beta (IFN-alpha/beta) and IFN-gamma signaling pathways and by blocking the formation of phosphorylated STAT1 and promoting ubiquitin-mediated proteasome-dependent degradation of STAT1. Activates STAT3 leading to cellular transformation. Regulates the activity of cellular genes, including c-myc and c-fos. May repress the promoter of p53, and sequester CREB3 and SP110 isoform 3/Sp110b in the cytoplasm. Represses cell cycle negative regulating factor CDKN1A, thereby interrupting an important check point of normal cell cycle regulation. Targets transcription factors involved in the regulation of inflammatory responses and in the immune response: suppresses TNF-induced NF-kappa-B activation, and activates AP-1. Binds to dendritic cells (DCs) via C1QR1, resulting in down-regulation of T-lymphocytes proliferation. Alters lipid metabolism by interacting with hepatocellular proteins involved in lipid accumulation and storage. Induces up-regulation of FAS promoter activity, and thereby contributes to the increased triglyceride accumulation in hepatocytes (steatosis). Forms a heterodimer with envelope glycoprotein E2, which mediates virus attachment to the host cell, virion internalization through clathrin-dependent endocytosis and fusion with host membrane. Fusion with the host cell is most likely mediated by both E1 and E2, through conformational rearrangements of the heterodimer required for fusion rather than a classical class II fusion mechanism. E1/E2 heterodimer binds host apolipoproteins such as APOB and ApoE thereby forming a lipo-viro-particle (LVP). APOE associated to the LVP allows the initial virus attachment to cell surface receptors such as the heparan sulfate proteoglycans (HSPGs), syndecan-1 (SDC1), syndecan-1 (SDC2), the low-density lipoprotein receptor (LDLR) and scavenger receptor class B type I (SCARB1). The cholesterol transfer activity of SCARB1 allows E2 exposure and binding of E2 to SCARB1 and the tetraspanin CD81. E1/E2 heterodimer binding on CD81 activates the epithelial growth factor receptor (EGFR) signaling pathway. Diffusion of the complex E1-E2-EGFR-SCARB1-CD81 to the cell lateral membrane allows further interaction with Claudin 1 (CLDN1) and occludin (OCLN) to finally trigger HCV entry. Functionally, forms a heterodimer with envelope glycoprotein E1, which mediates virus attachment to the host cell, virion internalization through clathrin-dependent endocytosis and fusion with host membrane. Fusion with the host cell is most likely mediated by both E1 and E2, through conformational rearrangements of the heterodimer required for fusion rather than a classical class II fusion mechanism. The interaction between envelope glycoprotein E2 and host apolipoprotein E/APOE allows the proper assembly, maturation and infectivity of the viral particles. This interaction is probably promoted via the up-regulation of cellular autophagy by the virus. E1/E2 heterodimer binds host apolipoproteins such as APOB and APOE thereby forming a lipo-viro-particle (LVP). APOE associated to the LVP allows the initial virus attachment to cell surface receptors such as the heparan sulfate proteoglycans (HSPGs), syndecan-1 (SDC1), syndecan-1 (SDC2), the low-density lipoprotein receptor (LDLR) and scavenger receptor class B type I (SCARB1). The cholesterol transfer activity of SCARB1 allows E2 exposure and binding of E2 to SCARB1 and the tetraspanin CD81. E1/E2 heterodimer binding on CD81 activates the epithelial growth factor receptor (EGFR) signaling pathway. Diffusion of the complex E1-E2-EGFR-SCARB1-CD81 to the cell lateral membrane allows further interaction with Claudin 1 (CLDN1) and occludin (OCLN) to finally trigger HCV entry. Inhibits host EIF2AK2/PKR activation, preventing the establishment of an antiviral state. Viral ligand for CD209/DC-SIGN and CLEC4M/DC-SIGNR, which are respectively found on dendritic cells (DCs), and on liver sinusoidal endothelial cells and macrophage-like cells of lymph node sinuses. These interactions allow the capture of circulating HCV particles by these cells and subsequent facilitated transmission to permissive cells such as hepatocytes and lymphocyte subpopulations. The interaction between E2 and host amino acid transporter complex formed by SLC3A2 and SLC7A5/LAT1 may facilitate viral entry into host cell. In terms of biological role, ion channel protein that acts as a viroporin and plays an essential role in the assembly, envelopment and secretion of viral particles. Regulates the host cell secretory pathway, which induces the intracellular retention of viral glycoproteins and favors assembly of viral particles. Creates a pore in acidic organelles and releases Ca(2+) and H(+) in the cytoplasm of infected cells, leading to a productive viral infection. High levels of cytoplasmic Ca(2+) may trigger membrane trafficking and transport of viral ER-associated proteins to viroplasms, sites of viral genome replication. This ionic imbalance induces the assembly of the inflammasome complex, which triggers the maturation of pro-IL-1beta into IL-1beta through the action of caspase-1. Targets also host mitochondria and induces mitochondrial depolarization. In addition of its role as a viroporin, acts as a lipid raft adhesion factor. Its function is as follows. Cysteine protease required for the proteolytic auto-cleavage between the non-structural proteins NS2 and NS3. The N-terminus of NS3 is required for the function of NS2 protease (active region NS2-3). Promotes the initiation of viral particle assembly by mediating the interaction between structural and non-structural proteins. Displays three enzymatic activities: serine protease with a chymotrypsin-like fold, NTPase and RNA helicase. NS3 serine protease, in association with NS4A, is responsible for the cleavages of NS3-NS4A, NS4A-NS4B, NS4B-NS5A and NS5A-NS5B. The NS3/NS4A complex prevents phosphorylation of host IRF3, thus preventing the establishment of dsRNA induced antiviral state. The NS3/NS4A complex induces host amino acid transporter component SLC3A2, thus contributing to HCV propagation. NS3 RNA helicase binds to RNA and unwinds both dsDNA and dsRNA in the 3' to 5' direction, and likely resolves RNA complicated stable secondary structures in the template strand. Binds a single ATP and catalyzes the unzipping of a single base pair of dsRNA. Inhibits host antiviral proteins TBK1 and IRF3 thereby preventing the establishment of an antiviral state. Cleaves host MAVS/CARDIF thereby preventing the establishment of an antiviral state. Cleaves host TICAM1/TRIF, thereby disrupting TLR3 signaling and preventing the establishment of an antiviral state. Functionally, induces a specific membrane alteration that serves as a scaffold for the virus replication complex. This membrane alteration gives rise to the so-called ER-derived membranous web that contains the replication complex. NS4B self-interaction contributes to its function in membranous web formation. Promotes host TRIF protein degradation in a CASP8-dependent manner thereby inhibiting host TLR3-mediated interferon signaling. Disrupts the interaction between STING and TBK1 contributing to the inhibition of interferon signaling. In terms of biological role, phosphorylated protein that is indispensable for viral replication and assembly. Both hypo- and hyperphosphorylated states are required for the viral life cycle. The hyperphosphorylated form of NS5A is an inhibitor of viral replication. Involved in RNA-binding and especially in binding to the viral genome. Zinc is essential for RNA-binding. Participates in the viral particle production as a result of its interaction with the mature viral core protein. Its interaction with host VAPB may target the viral replication complex to vesicles. Down-regulates viral IRES translation initiation. Mediates interferon resistance, presumably by interacting with and inhibiting host EIF2AK2/PKR. Prevents BIN1-induced apoptosis. Acts as a transcriptional activator of some host genes important for viral replication when localized in the nucleus. Via the interaction with host PACSIN2, modulates lipid droplet formation in order to promote virion assembly. Modulates TNFRSF21/DR6 signaling pathway for viral propagation. Its function is as follows. RNA-dependent RNA polymerase that performs primer-template recognition and RNA synthesis during viral replication. Initiates RNA transcription/replication at a flavin adenine dinucleotide (FAD), resulting in a 5'- FAD cap on viral RNAs. In this way, recognition of viral 5' RNA by host pattern recognition receptors can be bypassed, thereby evading activation of antiviral pathways. In Hepatitis C virus genotype 2b (isolate JPUT971017) (HCV), this protein is Genome polyprotein.